Reading from the N-terminus, the 208-residue chain is Protein-L-isoaspartate O-methyltransferase (208 aa).

Ser-59 is an active-site residue.

Belongs to the methyltransferase superfamily. L-isoaspartyl/D-aspartyl protein methyltransferase family.

It is found in the cytoplasm. The catalysed reaction is [protein]-L-isoaspartate + S-adenosyl-L-methionine = [protein]-L-isoaspartate alpha-methyl ester + S-adenosyl-L-homocysteine. Its function is as follows. Catalyzes the methyl esterification of L-isoaspartyl residues in peptides and proteins that result from spontaneous decomposition of normal L-aspartyl and L-asparaginyl residues. It plays a role in the repair and/or degradation of damaged proteins. The protein is Protein-L-isoaspartate O-methyltransferase of Escherichia coli O1:K1 / APEC.